The following is a 325-amino-acid chain: tRNA N(3)-methylcytidine methyltransferase Mettl2 (325 aa).

Positions 96 and 100 each coordinate S-adenosyl-L-methionine. S-adenosyl-L-homocysteine-binding residues include Y100, H112, E138, G140, D165, D191, and I212. Residues G140, D165, D191, and I212 each coordinate S-adenosyl-L-methionine.

It belongs to the methyltransferase superfamily. METL family. Interacts with Psn. As to expression, widely expressed. Expressed in ovaries, head, thorax and abdomen of adult flies, and in the CNS of third instar larvae. Isoform 2 is predominantly expressed in larvae and in adult tissues that have been tested.

Functionally, probable methyltransferase. This chain is tRNA N(3)-methylcytidine methyltransferase Mettl2, found in Drosophila melanogaster (Fruit fly).